The sequence spans 227 residues: Lipoprotein-releasing system ATP-binding protein LolD (227 aa).

The region spanning 6–227 (LTSQKLYKSY…LHEGSLYARE (222 aa)) is the ABC transporter domain. 42 to 49 (GPSGSGKS) contributes to the ATP binding site.

This sequence belongs to the ABC transporter superfamily. Lipoprotein translocase (TC 3.A.1.125) family. As to quaternary structure, the complex is composed of two ATP-binding proteins (LolD) and two transmembrane proteins (LolC and LolE).

Its subcellular location is the cell inner membrane. In terms of biological role, part of the ABC transporter complex LolCDE involved in the translocation of mature outer membrane-directed lipoproteins, from the inner membrane to the periplasmic chaperone, LolA. Responsible for the formation of the LolA-lipoprotein complex in an ATP-dependent manner. This chain is Lipoprotein-releasing system ATP-binding protein LolD, found in Legionella pneumophila (strain Lens).